A 268-amino-acid chain; its full sequence is Phosphatidylglycerol--prolipoprotein diacylglyceryl transferase (268 aa).

7 consecutive transmembrane segments (helical) span residues proline 27–leucine 47, leucine 66–tyrosine 86, glycine 104–tryptophan 124, phenylalanine 130–isoleucine 150, proline 181–phenylalanine 201, valine 208–threonine 228, and phenylalanine 242–leucine 262. Arginine 149 contacts a 1,2-diacyl-sn-glycero-3-phospho-(1'-sn-glycerol).

It belongs to the Lgt family.

The protein resides in the cell inner membrane. It catalyses the reaction L-cysteinyl-[prolipoprotein] + a 1,2-diacyl-sn-glycero-3-phospho-(1'-sn-glycerol) = an S-1,2-diacyl-sn-glyceryl-L-cysteinyl-[prolipoprotein] + sn-glycerol 1-phosphate + H(+). It participates in protein modification; lipoprotein biosynthesis (diacylglyceryl transfer). Functionally, catalyzes the transfer of the diacylglyceryl group from phosphatidylglycerol to the sulfhydryl group of the N-terminal cysteine of a prolipoprotein, the first step in the formation of mature lipoproteins. This Shewanella sp. (strain MR-4) protein is Phosphatidylglycerol--prolipoprotein diacylglyceryl transferase.